The primary structure comprises 201 residues: MAEKFTQHTGLVVPLDAANIDTDAIIPKQFLQKVTRTGFGAHLFNDWRFLDEKGQQPNPEFVLNFPEYQGASILLARENFGCGSSREHAPWALTDYGFKVVIAPSFADIFYGNSFNNQLLPVTLSDAQVDELFALVKANPGIKFEVDLEAQVVKAGDKTYSFKIDDFRRHCMLNGLDSIGLTLQHEDAIAAYENKQPAFMR.

It belongs to the LeuD family. LeuD type 1 subfamily. In terms of assembly, heterodimer of LeuC and LeuD.

It carries out the reaction (2R,3S)-3-isopropylmalate = (2S)-2-isopropylmalate. It functions in the pathway amino-acid biosynthesis; L-leucine biosynthesis; L-leucine from 3-methyl-2-oxobutanoate: step 2/4. Its function is as follows. Catalyzes the isomerization between 2-isopropylmalate and 3-isopropylmalate, via the formation of 2-isopropylmaleate. The polypeptide is 3-isopropylmalate dehydratase small subunit (Salmonella schwarzengrund (strain CVM19633)).